The chain runs to 503 residues: Zinc metalloproteinase nas-14 (503 aa).

An N-terminal signal peptide occupies residues methionine 1–proline 25. A Peptidase M12A domain is found at asparagine 116–glycine 312. Intrachain disulfides connect cysteine 158-cysteine 311 and cysteine 182-cysteine 202. Residue asparagine 192 is glycosylated (N-linked (GlcNAc...) asparagine). Position 210 (histidine 210) interacts with Zn(2+). Glutamate 211 is a catalytic residue. Histidine 214 and histidine 220 together coordinate Zn(2+). A compositionally biased stretch (low complexity) spans threonine 317–threonine 340. The tract at residues threonine 317–asparagine 377 is disordered. The span at valine 342–valine 351 shows a compositional bias: basic and acidic residues. The span at serine 352–lysine 370 shows a compositional bias: low complexity. Disulfide bonds link cysteine 380-cysteine 414, cysteine 387-cysteine 407, and cysteine 396-cysteine 411. The ShKT 1 domain occupies cysteine 380 to cysteine 414. The interval threonine 422–alanine 464 is disordered. Asparagine 437 carries N-linked (GlcNAc...) asparagine glycosylation. The segment covering serine 439–alanine 464 has biased composition (low complexity). 3 cysteine pairs are disulfide-bonded: cysteine 469-cysteine 503, cysteine 476-cysteine 496, and cysteine 485-cysteine 500. Residues cysteine 469–cysteine 503 form the ShKT 2 domain.

Requires Zn(2+) as cofactor. As to expression, expressed in pharyngeal muscles and mc cells.

Its subcellular location is the secreted. Functionally, metalloprotease. The chain is Zinc metalloproteinase nas-14 (nas-14) from Caenorhabditis elegans.